Here is a 1054-residue protein sequence, read N- to C-terminus: MPRRDDIRSILIIGSGPIVIGQAAEFDYSGTQACRALKEEGYRVILVNSNPATIMTDPEMADTTYIEPLRAETVAEVIRRERPDALLPTLGGQTALNLAVELSEAGVLEEYGVQLLGASIPSIQKAEDRQLFREAMERIGLRVPESRTVRSVPEAEELAERIGFPLIIRPSFTLGGTGGSVAEDLDALRASVRDGLDASPVRSVLVERSVAGWKEFELEVMRDLADNVVIVCSIENVDPMGVHTGDSITVAPAQTLSDRQYQSLRTAAIRIIREIGVSTGGSNIQFAVNPEGDDFYVIEMNPRVSRSSALASKATGFPIAKIAARLAVGYTLDEITNDITGATPASFEPALDYVVTKIPRFAFEKFPGTSARLTTRMHSVGEVMAIGRTFTESLLKAMASLEIETRDIQARLDEPSPYRIFAVFEALRAGMDIPEIYRRTSIDPFFIAAAARIVAAEGAVEETLSAEQVRELKRMGFTDEALAACSGYPAEVVRGVRRALGVHPTYKAVDTCAGEFPARTPYYYSTYEQEDEVERGENPSVVVLGSGPNRIGQGIEFDYACVHASYELKACGYDAVMINSNPETVSTDYDTSSRLYFEPLTAEHVLEVVRRERPEGVILQFGGQSPLKLARELERAGARVLGTSPEAIDLAEDRSRFGRLLRELGIPHPRFGTATTAAEAREVARRLGYPVVVRPSYVLGGRRMEIVYGDEDLELYLRSSVSGSPEHPILVDKFMEAYVEVDVDAVSDGEEVYIGGIMEHIEEAGVHSGDSSCVTPPITLTRSLQERIEDYTRRLALSIGVVGLMNVQYVVRGDEVMAIECNPRASRTVPYISKATGVPLARLATRVLLGEKLRDLGPRPASSGSFAVKAPVFPFDRFAEVDPLLGPEMRSTGEAMGIDPTFGGAFAKALAAAGQRLPESGRVYVSVADRDKRAAVLIARGFADLGFEVLASEGTAGVLRNNGLPAAVVPKIGEGGEDVLGLIERGGVDLIVNTPWGRGSRTDGYLIRRKALMHRVPCITTLAGAAAALQGIEARIRGETRRVHSLQDLYAART.

The segment at 1–402 is carboxyphosphate synthetic domain; that stretch reads MPRRDDIRSI…SLLKAMASLE (402 aa). Residues Arg129, Arg169, Gly175, Gly176, Arg208, Val210, Glu215, Gly241, Val242, His243, Gln285, and Glu299 each coordinate ATP. Positions 133–328 constitute an ATP-grasp 1 domain; sequence REAMERIGLR…IAKIAARLAV (196 aa). Mg(2+) is bound by residues Gln285, Glu299, and Asn301. Residues Gln285, Glu299, and Asn301 each coordinate Mn(2+). Positions 403-531 are oligomerization domain; sequence IETRDIQARL…YYYSTYEQED (129 aa). The carbamoyl phosphate synthetic domain stretch occupies residues 532-914; sequence EVERGENPSV…AFAKALAAAG (383 aa). An ATP-grasp 2 domain is found at 658-849; the sequence is GRLLRELGIP…LARLATRVLL (192 aa). ATP-binding residues include Arg694, Lys733, Glu740, Gly765, Val766, His767, Ser768, Gln808, and Glu820. Mg(2+) is bound by residues Gln808, Glu820, and Asn822. Mn(2+) is bound by residues Gln808, Glu820, and Asn822. The region spanning 915–1054 is the MGS-like domain; that stretch reads QRLPESGRVY…SLQDLYAART (140 aa). The tract at residues 915–1054 is allosteric domain; sequence QRLPESGRVY…SLQDLYAART (140 aa).

The protein belongs to the CarB family. Composed of two chains; the small (or glutamine) chain promotes the hydrolysis of glutamine to ammonia, which is used by the large (or ammonia) chain to synthesize carbamoyl phosphate. Tetramer of heterodimers (alpha,beta)4. Mg(2+) serves as cofactor. Mn(2+) is required as a cofactor.

The catalysed reaction is hydrogencarbonate + L-glutamine + 2 ATP + H2O = carbamoyl phosphate + L-glutamate + 2 ADP + phosphate + 2 H(+). It carries out the reaction hydrogencarbonate + NH4(+) + 2 ATP = carbamoyl phosphate + 2 ADP + phosphate + 2 H(+). It participates in amino-acid biosynthesis; L-arginine biosynthesis; carbamoyl phosphate from bicarbonate: step 1/1. It functions in the pathway pyrimidine metabolism; UMP biosynthesis via de novo pathway; (S)-dihydroorotate from bicarbonate: step 1/3. Functionally, large subunit of the glutamine-dependent carbamoyl phosphate synthetase (CPSase). CPSase catalyzes the formation of carbamoyl phosphate from the ammonia moiety of glutamine, carbonate, and phosphate donated by ATP, constituting the first step of 2 biosynthetic pathways, one leading to arginine and/or urea and the other to pyrimidine nucleotides. The large subunit (synthetase) binds the substrates ammonia (free or transferred from glutamine from the small subunit), hydrogencarbonate and ATP and carries out an ATP-coupled ligase reaction, activating hydrogencarbonate by forming carboxy phosphate which reacts with ammonia to form carbamoyl phosphate. This chain is Carbamoyl phosphate synthase large chain, found in Rubrobacter xylanophilus (strain DSM 9941 / JCM 11954 / NBRC 16129 / PRD-1).